The sequence spans 315 residues: Putative peptide transport system permease protein BMEII0209 (315 aa).

Helical transmembrane passes span 13 to 33 (AIPV…LLPG), 102 to 122 (LALL…VVAA), 136 to 156 (LALL…VILF), 178 to 198 (WLRS…GYLA), 238 to 258 (VSVL…SVVI), and 287 to 307 (MLFL…LYTI). Positions 96-305 (LPVTISLALL…AINVLVDILY (210 aa)) constitute an ABC transmembrane type-1 domain.

This sequence belongs to the binding-protein-dependent transport system permease family. The complex is composed of two ATP-binding proteins (BMEII0205 and BMEII0206), two transmembrane proteins (BMEII0207/BMEII0208 and BMEII0209) and a solute-binding protein (BMEII0210).

Its subcellular location is the cell inner membrane. Probably part of an ABC transporter complex that could be involved in peptide import. Probably responsible for the translocation of the substrate across the membrane. The protein is Putative peptide transport system permease protein BMEII0209 of Brucella melitensis biotype 1 (strain ATCC 23456 / CCUG 17765 / NCTC 10094 / 16M).